A 401-amino-acid polypeptide reads, in one-letter code: Argininosuccinate synthase (401 aa).

Residues 11-19 (AYSGGLDTS) and alanine 38 contribute to the ATP site. 2 residues coordinate L-citrulline: tyrosine 89 and serine 94. Glycine 119 is an ATP binding site. L-aspartate is bound by residues threonine 121, asparagine 125, and aspartate 126. Asparagine 125 lines the L-citrulline pocket. Positions 129, 180, 189, 265, and 277 each coordinate L-citrulline.

Belongs to the argininosuccinate synthase family. Type 1 subfamily. As to quaternary structure, homotetramer.

The protein localises to the cytoplasm. It carries out the reaction L-citrulline + L-aspartate + ATP = 2-(N(omega)-L-arginino)succinate + AMP + diphosphate + H(+). The protein operates within amino-acid biosynthesis; L-arginine biosynthesis; L-arginine from L-ornithine and carbamoyl phosphate: step 2/3. This chain is Argininosuccinate synthase, found in Syntrophus aciditrophicus (strain SB).